The primary structure comprises 521 residues: Apolipoprotein N-acyltransferase (521 aa).

Transmembrane regions (helical) follow at residues 34-54 (LAAP…PLLV), 64-84 (AFWL…RWLL), 100-120 (LAIA…VIGL), 137-157 (LFAV…ETAF), 176-196 (VALG…ALVA), and 206-226 (YAGL…WQLA). Positions 240–480 (IQGNIAQARK…YAAFVEPVRL (241 aa)) constitute a CN hydrolase domain. Glu-281 serves as the catalytic Proton acceptor. Lys-341 is an active-site residue. The Nucleophile role is filled by Cys-392. Residues 488–508 (ALWGDWFVPLSAALALLGLIA) traverse the membrane as a helical segment.

It belongs to the CN hydrolase family. Apolipoprotein N-acyltransferase subfamily.

It localises to the cell inner membrane. The enzyme catalyses N-terminal S-1,2-diacyl-sn-glyceryl-L-cysteinyl-[lipoprotein] + a glycerophospholipid = N-acyl-S-1,2-diacyl-sn-glyceryl-L-cysteinyl-[lipoprotein] + a 2-acyl-sn-glycero-3-phospholipid + H(+). It functions in the pathway protein modification; lipoprotein biosynthesis (N-acyl transfer). Catalyzes the phospholipid dependent N-acylation of the N-terminal cysteine of apolipoprotein, the last step in lipoprotein maturation. This Gloeobacter violaceus (strain ATCC 29082 / PCC 7421) protein is Apolipoprotein N-acyltransferase.